A 435-amino-acid polypeptide reads, in one-letter code: Adenylosuccinate synthetase (435 aa).

Residues Gly17–Lys23 and Gly45–Thr47 contribute to the GTP site. Catalysis depends on Asp18, which acts as the Proton acceptor. 2 residues coordinate Mg(2+): Asp18 and Gly45. IMP-binding positions include Asp18–Lys21, Asn43–His46, Thr135, Arg149, Gln230, Thr245, and Arg309. The active-site Proton donor is His46. Residue Thr305–Arg311 coordinates substrate. GTP-binding positions include Arg311, Leu337–Asp339, and Ser419–Gly421.

This sequence belongs to the adenylosuccinate synthetase family. As to quaternary structure, homodimer. Mg(2+) serves as cofactor.

The protein resides in the cytoplasm. It carries out the reaction IMP + L-aspartate + GTP = N(6)-(1,2-dicarboxyethyl)-AMP + GDP + phosphate + 2 H(+). It participates in purine metabolism; AMP biosynthesis via de novo pathway; AMP from IMP: step 1/2. Functionally, plays an important role in the de novo pathway of purine nucleotide biosynthesis. Catalyzes the first committed step in the biosynthesis of AMP from IMP. This is Adenylosuccinate synthetase from Spiroplasma citri.